The sequence spans 856 residues: Nuclear valosin-containing protein-like (856 aa).

The interval 1-220 is interaction with RPL5; sequence MKPRPAGFVD…SLLESDMKRK (220 aa). The Nucleolar localization signal motif lies at 49–52; the sequence is RRKR. Lysine 70 is modified (N6-acetyllysine). The interval 84–175 is disordered; that stretch reads AKRARQGEED…AKDSEGGWFI (92 aa). The Nuclear localization signal motif lies at 85-88; sequence KRAR. Residues 92–111 are compositionally biased toward acidic residues; sequence EDNEYTESYSDDDSSMEDYP. 2 stretches are compositionally biased toward polar residues: residues 114-124 and 133-158; these read QSANHMNSSLL and DSVSNTPEMEQRETTSSTPRISSKTG. At serine 134 the chain carries Phosphoserine. Position 138 is a phosphothreonine (threonine 138). At lysine 156 the chain carries N6-acetyllysine. At serine 191 the chain carries Phosphoserine. The segment at 197-236 is disordered; the sequence is PKKPITEIQDSKDSSLLESDMKRKGKLKNKGSKRKKEDLQ. A compositionally biased stretch (basic and acidic residues) spans 205-218; the sequence is QDSKDSSLLESDMK. Lysine 208 is covalently cross-linked (Glycyl lysine isopeptide (Lys-Gly) (interchain with G-Cter in SUMO2)). Serine 211 and serine 215 each carry phosphoserine. The Nuclear localization signal signature appears at 218 to 232; the sequence is KRKGKLKNKGSKRKK. A compositionally biased stretch (basic residues) spans 219-230; it reads RKGKLKNKGSKR. The interaction with WDR74 stretch occupies residues 267 to 474; it reads VGGNDMTLKE…LTPGFVGADL (208 aa). ATP is bound at residue 305–312; that stretch reads GPPGCGKT. The tract at residues 496–523 is disordered; that stretch reads QQKKNPEMEDLPSKGVQEERLGTEPTSE. 622 to 629 provides a ligand contact to ATP; that stretch reads GPPGCGKT.

It belongs to the AAA ATPase family. In terms of assembly, interacts with NCL/nucleolin. Isoform 1 and isoform 2 interact with TERT and isoform 1 exhibits a higher binding affinity for TERT compared to isoform 2. Isoform 1 interacts with MTREX in an ATP-dependent manner; the interaction is required to associate NVL with nuclear RNA exosome. Isoform 1 interacts with RPL5 in an ATP-dependent manner. Interacts with WDR74 (through WDR repeats); the interaction is independent of RNA or pre-60S ribosome particles. Widely expressed. Highest level of expression in heart, placenta, skeletal muscle, pancreas and retina.

It is found in the nucleus. The protein localises to the nucleoplasm. It localises to the nucleolus. Participates in the assembly of the telomerase holoenzyme and effecting of telomerase activity via its interaction with TERT. Involved in both early and late stages of the pre-rRNA processing pathways. Spatiotemporally regulates 60S ribosomal subunit biogenesis in the nucleolus. Catalyzes the release of specific assembly factors, such as WDR74, from pre-60S ribosomal particles through the ATPase activity. In Homo sapiens (Human), this protein is Nuclear valosin-containing protein-like.